A 341-amino-acid polypeptide reads, in one-letter code: Dihydroorotate dehydrogenase (quinone) (341 aa).

FMN-binding positions include 61–65 and T85; that span reads AGLDK. K65 contacts substrate. Residue 110 to 114 coordinates substrate; that stretch reads NRMGF. 2 residues coordinate FMN: N138 and N171. N171 lines the substrate pocket. S174 functions as the Nucleophile in the catalytic mechanism. Residue N176 participates in substrate binding. FMN is bound by residues K216 and T244. Residue 245–246 coordinates substrate; it reads NT. FMN-binding positions include G267, G296, and 317–318; that span reads YS.

The protein belongs to the dihydroorotate dehydrogenase family. Type 2 subfamily. As to quaternary structure, monomer. FMN serves as cofactor.

The protein resides in the cell membrane. The catalysed reaction is (S)-dihydroorotate + a quinone = orotate + a quinol. The protein operates within pyrimidine metabolism; UMP biosynthesis via de novo pathway; orotate from (S)-dihydroorotate (quinone route): step 1/1. Its function is as follows. Catalyzes the conversion of dihydroorotate to orotate with quinone as electron acceptor. This is Dihydroorotate dehydrogenase (quinone) from Pseudomonas putida (strain GB-1).